A 128-amino-acid polypeptide reads, in one-letter code: Cytochrome c-type biogenesis protein CcmE (128 aa).

The Cytoplasmic portion of the chain corresponds to 1-8 (MQKIVRNR). The chain crosses the membrane as a helical; Signal-anchor for type II membrane protein span at residues 9 to 29 (LIKIILCFCSTCLGISIILYN). Residues 30 to 128 (LEKNIIFFFP…KHDENYRPPS (99 aa)) are Periplasmic-facing. Heme-binding residues include histidine 120 and tyrosine 124.

Belongs to the CcmE/CycJ family.

The protein resides in the cell inner membrane. Its function is as follows. Heme chaperone required for the biogenesis of c-type cytochromes. Transiently binds heme delivered by CcmC and transfers the heme to apo-cytochromes in a process facilitated by CcmF and CcmH. The chain is Cytochrome c-type biogenesis protein CcmE from Rickettsia typhi (strain ATCC VR-144 / Wilmington).